A 383-amino-acid polypeptide reads, in one-letter code: Delta(12) acyl-lipid conjugase (11E,13E-forming) (383 aa).

A disordered region spans residues 1–30; it reads MGEVGPTNRTKTKLDKQQESENRVPHEPPP. Residues 12–26 show a composition bias toward basic and acidic residues; the sequence is TKLDKQQESENRVPH. 2 helical membrane passes run 56–76 and 84–104; these read VIHDIIILSFFYYVAANYIPM and VAWPIYWAIQGCVQLGILVLG. The Histidine box-1 motif lies at 105-109; it reads HECGH. Positions 141–145 match the Histidine box-2 motif; it reads HRRHH. 3 consecutive transmembrane segments (helical) span residues 179–199, 225–245, and 249–269; these read FLMIFGALLFGWPSYLLFNAN, VIASDVGLVFAYFVLYKIALA, and VWLICVYGVPYVILNGLIVLI. Positions 315–319 match the Histidine box-3 motif; the sequence is HLVHH.

Belongs to the fatty acid desaturase type 1 family. In terms of tissue distribution, expressed in developing seeds, but not in leaves.

Its subcellular location is the membrane. The catalysed reaction is a (9Z,12Z)-octadecadienoyl-containing glycerolipid + 2 Fe(II)-[cytochrome b5] + O2 + 2 H(+) = a (9Z,11E,13E)-octadecatrienoyl-containing glycerolipid + 2 Fe(III)-[cytochrome b5] + 2 H2O. It carries out the reaction (9Z,12Z,15Z)-octadecatrienoyl-containing glycerolipid + 2 Fe(II)-[cytochrome b5] + O2 + 2 H(+) = a (9Z,11E,13E,15Z)-octadecatetraenoyl-containing glycerolipid + 2 Fe(III)-[cytochrome b5] + 2 H2O. Its pathway is lipid metabolism; polyunsaturated fatty acid biosynthesis. In terms of biological role, converts linoleic acid to alpha-eleostearic acid (18:3(9Z,11E,13E)) and alpha-linolenic acid to alpha-parinaric acid (18:4(9Z,11E, 13E, 15Z)). Converts a single cis double bond at carbon 12 to two conjugated trans bonds at positions 11 and 13. This chain is Delta(12) acyl-lipid conjugase (11E,13E-forming), found in Impatiens balsamina (Balsam).